The primary structure comprises 612 residues: Bifunctional 6(G)-fructosyltransferase/2,1-fructan:2,1-fructan 1-fructosyltransferase (612 aa).

The Cytoplasmic segment spans residues 1 to 24 (MDAQDIESRHPLIGARPRRRALRS). A helical; Signal-anchor for type II membrane protein transmembrane segment spans residues 25–45 (LSILLAAALLLGLVLFYANGT). The Vacuolar portion of the chain corresponds to 46–612 (GSGTAVDPVR…NSTYNDFYHF (567 aa)). Substrate-binding positions include 82 to 85 (YMND), glutamine 101, and tryptophan 109. Aspartate 85 is a catalytic residue. Asparagine 111 carries N-linked (GlcNAc...) asparagine glycosylation. Substrate-binding positions include 144–145 (WT) and 208–209 (RD). N-linked (GlcNAc...) asparagine glycosylation is found at asparagine 216 and asparagine 230. A substrate-binding site is contributed by glutamate 267. Asparagine 465 is a glycosylation site (N-linked (GlcNAc...) asparagine). Cysteine 466 and cysteine 514 are disulfide-bonded. N-linked (GlcNAc...) asparagine glycans are attached at residues asparagine 586 and asparagine 603.

This sequence belongs to the glycosyl hydrolase 32 family. Might be processed in two N-terminal and C-terminal proteolytic fragments.

It localises to the vacuole membrane. The enzyme catalyses [1-beta-D-fructofuranosyl-(2-&gt;1)-]m+1 alpha-D-glucopyranoside + [1-beta-D-fructofuranosyl-(2-&gt;1)-]n+1 alpha-D-glucopyranoside = [1-beta-D-fructofuranosyl-(2-&gt;1)-]m alpha-D-glucopyranoside + [1-beta-D-fructofuranosyl-(2-&gt;1)-]n+1 beta-D-fructofuranosyl-(2-&gt;6)-alpha-D-glucopyranoside (m &gt; 0, n &gt;= 0).. The catalysed reaction is [beta-D-fructosyl-(2-&gt;1)-]m + [beta-D-fructosyl-(2-&gt;1)-]n = [beta-D-fructosyl-(2-&gt;1)-]m-1 + [beta-D-fructosyl-(2-&gt;1)-]n+1.. Involved in the synthesis of fructan of the inulin neoseries. Catalyzes a self-transfer between identical oligosaccharides of the 1-kestose series. The sequence is that of Bifunctional 6(G)-fructosyltransferase/2,1-fructan:2,1-fructan 1-fructosyltransferase from Allium cepa (Onion).